A 436-amino-acid polypeptide reads, in one-letter code: GTPase Der (436 aa).

2 EngA-type G domains span residues 4-167 (PTVA…PNEI) and 175-351 (IKFS…HAQN). Residues 10–17 (GRPNVGKS), 57–61 (DTGGI), 119–122 (NKVD), 181–188 (GRPNVGKS), 229–233 (DTAGM), and 294–297 (NKWD) contribute to the GTP site. The region spanning 352–436 (LRISSSVLND…PVHLIARKRK (85 aa)) is the KH-like domain.

It belongs to the TRAFAC class TrmE-Era-EngA-EngB-Septin-like GTPase superfamily. EngA (Der) GTPase family. In terms of assembly, associates with the 50S ribosomal subunit.

Its function is as follows. GTPase that plays an essential role in the late steps of ribosome biogenesis. The chain is GTPase Der from Lactococcus lactis subsp. lactis (strain IL1403) (Streptococcus lactis).